The primary structure comprises 229 residues: Trypsin (229 aa).

Residues 1-7 constitute a propeptide, activation peptide; it reads APDDDDK. One can recognise a Peptidase S1 domain in the interval 8-227; sequence IVGGYECPKH…YVSWIHETIA (220 aa). Cystine bridges form between cysteine 14–cysteine 143, cysteine 32–cysteine 48, cysteine 116–cysteine 216, cysteine 123–cysteine 189, cysteine 154–cysteine 168, and cysteine 179–cysteine 203. The active-site Charge relay system is the histidine 47. The Ca(2+) site is built by glutamate 59 and glutamate 69. The active-site Charge relay system is the aspartate 91. Residue serine 183 is the Charge relay system of the active site.

Belongs to the peptidase S1 family. The cofactor is Ca(2+).

It localises to the secreted. The protein resides in the extracellular space. It catalyses the reaction Preferential cleavage: Arg-|-Xaa, Lys-|-Xaa.. The sequence is that of Trypsin from Squalus acanthias (Spiny dogfish).